The chain runs to 176 residues: Large ribosomal subunit protein uL5 (176 aa).

This sequence belongs to the universal ribosomal protein uL5 family. As to quaternary structure, part of the 50S ribosomal subunit; contacts the 5S rRNA and probably tRNA. Forms a bridge to the 30S subunit in the 70S ribosome.

This is one of the proteins that bind and probably mediate the attachment of the 5S RNA into the large ribosomal subunit, where it forms part of the central protuberance. In the 70S ribosome it contacts protein S13 of the 30S subunit (bridge B1b), connecting the 2 subunits; this bridge is implicated in subunit movement. May contact the P site tRNA; the 5S rRNA and some of its associated proteins might help stabilize positioning of ribosome-bound tRNAs. This Picrophilus torridus (strain ATCC 700027 / DSM 9790 / JCM 10055 / NBRC 100828 / KAW 2/3) protein is Large ribosomal subunit protein uL5.